We begin with the raw amino-acid sequence, 141 residues long: S-adenosylmethionine decarboxylase proenzyme (141 aa).

The Schiff-base intermediate with substrate; via pyruvic acid role is filled by Ser63. Ser63 is modified (pyruvic acid (Ser); by autocatalysis). His68 acts as the Proton acceptor; for processing activity in catalysis. Residue Cys83 is the Proton donor; for catalytic activity of the active site.

The protein belongs to the prokaryotic AdoMetDC family. Type 1 subfamily. In terms of assembly, heterotetramer of two alpha and two beta chains arranged as a dimer of alpha/beta heterodimers. Requires pyruvate as cofactor. Post-translationally, is synthesized initially as an inactive proenzyme. Formation of the active enzyme involves a self-maturation process in which the active site pyruvoyl group is generated from an internal serine residue via an autocatalytic post-translational modification. Two non-identical subunits are generated from the proenzyme in this reaction, and the pyruvate is formed at the N-terminus of the alpha chain, which is derived from the carboxyl end of the proenzyme. The post-translation cleavage follows an unusual pathway, termed non-hydrolytic serinolysis, in which the side chain hydroxyl group of the serine supplies its oxygen atom to form the C-terminus of the beta chain, while the remainder of the serine residue undergoes an oxidative deamination to produce ammonia and the pyruvoyl group blocking the N-terminus of the alpha chain.

It carries out the reaction S-adenosyl-L-methionine + H(+) = S-adenosyl 3-(methylsulfanyl)propylamine + CO2. It participates in amine and polyamine biosynthesis; S-adenosylmethioninamine biosynthesis; S-adenosylmethioninamine from S-adenosyl-L-methionine: step 1/1. In terms of biological role, catalyzes the decarboxylation of S-adenosylmethionine to S-adenosylmethioninamine (dcAdoMet), the propylamine donor required for the synthesis of the polyamines spermine and spermidine from the diamine putrescine. This is S-adenosylmethionine decarboxylase proenzyme from Thermococcus onnurineus (strain NA1).